The chain runs to 94 residues: Putative septation protein SpoVG (94 aa).

The protein belongs to the SpoVG family.

In terms of biological role, could be involved in septation. The protein is Putative septation protein SpoVG of Acholeplasma laidlawii (strain PG-8A).